The primary structure comprises 263 residues: Small ribosomal subunit protein bS1c (263 aa).

3 consecutive S1 motif domains span residues 27–96 (GDIV…LSIR), 114–178 (DSLL…LSHR), and 192–260 (GNII…LSMK).

The protein belongs to the bacterial ribosomal protein bS1 family.

The protein resides in the plastid. The protein localises to the chloroplast. This is Small ribosomal subunit protein bS1c (rps1) from Porphyra purpurea (Red seaweed).